A 192-amino-acid polypeptide reads, in one-letter code: GTP cyclohydrolase-2 (192 aa).

Residue 50-54 coordinates GTP; it reads RLHSE. Zn(2+) is bound by residues C55, C66, and C68. GTP is bound by residues 92-94 and T114; that span reads EGR. Residue D126 is the Proton acceptor of the active site. The active-site Nucleophile is R128. T149 and K154 together coordinate GTP.

Belongs to the GTP cyclohydrolase II family. Zn(2+) serves as cofactor.

It catalyses the reaction GTP + 4 H2O = 2,5-diamino-6-hydroxy-4-(5-phosphoribosylamino)-pyrimidine + formate + 2 phosphate + 3 H(+). It participates in cofactor biosynthesis; riboflavin biosynthesis; 5-amino-6-(D-ribitylamino)uracil from GTP: step 1/4. Catalyzes the conversion of GTP to 2,5-diamino-6-ribosylamino-4(3H)-pyrimidinone 5'-phosphate (DARP), formate and pyrophosphate. This Helicobacter pylori (strain J99 / ATCC 700824) (Campylobacter pylori J99) protein is GTP cyclohydrolase-2.